We begin with the raw amino-acid sequence, 299 residues long: Ribosomal RNA small subunit methyltransferase H (299 aa).

S-adenosyl-L-methionine is bound by residues 24-26 (GGH), Asp-43, Phe-68, Asp-90, and Gln-97.

This sequence belongs to the methyltransferase superfamily. RsmH family.

The protein resides in the cytoplasm. The catalysed reaction is cytidine(1402) in 16S rRNA + S-adenosyl-L-methionine = N(4)-methylcytidine(1402) in 16S rRNA + S-adenosyl-L-homocysteine + H(+). Specifically methylates the N4 position of cytidine in position 1402 (C1402) of 16S rRNA. The sequence is that of Ribosomal RNA small subunit methyltransferase H from Francisella tularensis subsp. tularensis (strain WY96-3418).